Here is a 258-residue protein sequence, read N- to C-terminus: Capsid protein (258 aa).

The Bipartite nuclear localization signal motif lies at 3 to 20; it reads KRPGDIIISTPGSKVRRR. A Nuclear localization signal motif is present at residues 41-55; the sequence is RKRAWVNRPMYRKPT. The segment at 69–86 is a zinc-finger region; that stretch reads CEGPCKVQSFEQRDDVKH. The Nuclear export signal motif lies at 102–123; the sequence is LTHRVGKRFCIKSIYILGKIWL. Positions 202 to 249 match the Bipartite nuclear localization signal motif; sequence KRFYRLNHHVTYNHQEAGKYENHTENALLLYMACTHASNPVYATLKIR.

This sequence belongs to the geminiviridae capsid protein family. Homomultimer. Binds to single-stranded and double-stranded viral DNA. Interacts (via nuclear localization signals) with host importin alpha-1a.

Its subcellular location is the virion. The protein resides in the host nucleus. Its function is as follows. Encapsidates the viral DNA into characteristic twinned ('geminate') particles. Binds the genomic viral ssDNA and shuttles it into and out of the cell nucleus. The CP of bipartite geminiviruses is not required for cell-to-cell or systemic movement. This African cassava mosaic virus (isolate West Kenyan 844) (ACMV) protein is Capsid protein.